The chain runs to 247 residues: uncharacterized protein (247 aa).

The first 35 residues, 1 to 35 (MWGPGVTAEGLSVAPAPPPLLPLLLLLALALVAPS), serve as a signal peptide directing secretion. A helical membrane pass occupies residues 82–102 (LSGLLILLVLFAIGYFLQRII). The disordered stretch occupies residues 109–176 (YPRGQARPGQ…RGSGGRLPPS (68 aa)). The segment covering 111-120 (RGQARPGQAR) has biased composition (low complexity). Positions 161-171 (SGGGRGRGSGG) are enriched in gly residues.

Its subcellular location is the membrane. This is an uncharacterized protein from Mus musculus (Mouse).